Here is a 311-residue protein sequence, read N- to C-terminus: MTKIIFMGTPDFSTTVLEMLIAEHDVIAVVTQPDRPVGRKRVMTPPPVKKVAMKYDLPVYQPEKLSGSEELEQLLQLDVDLIVTAAFGQLLPESLLALPKLGAINVHASLLPKYRGGAPIHQAIIDGEQETGITIMYMVKKLDAGNIISQQAIKIEENDNVGTMHDKLSVLGADLLKETLPSIIEGTNESVPQDDTQATFASNIRREDERISWNKPGRQVFNQIRGLSPWPVAYTTMDDTNLKIYDAELVETNKINEPGTIIETTKKAIIVATNDNEAVAIKDMQLAGKKRMLAANYLSGAQNILVGKKLI.

Residue 109-112 (SLLP) coordinates (6S)-5,6,7,8-tetrahydrofolate.

Belongs to the Fmt family.

The enzyme catalyses L-methionyl-tRNA(fMet) + (6R)-10-formyltetrahydrofolate = N-formyl-L-methionyl-tRNA(fMet) + (6S)-5,6,7,8-tetrahydrofolate + H(+). Attaches a formyl group to the free amino group of methionyl-tRNA(fMet). The formyl group appears to play a dual role in the initiator identity of N-formylmethionyl-tRNA by promoting its recognition by IF2 and preventing the misappropriation of this tRNA by the elongation apparatus. The protein is Methionyl-tRNA formyltransferase of Staphylococcus aureus (strain bovine RF122 / ET3-1).